A 367-amino-acid chain; its full sequence is UDP-N-acetylglucosamine--N-acetylmuramyl-(pentapeptide) pyrophosphoryl-undecaprenol N-acetylglucosamine transferase (367 aa).

UDP-N-acetyl-alpha-D-glucosamine contacts are provided by residues 15 to 17 (TGG), asparagine 127, arginine 163, serine 191, isoleucine 249, and glutamine 294.

Belongs to the glycosyltransferase 28 family. MurG subfamily.

Its subcellular location is the cell inner membrane. It carries out the reaction di-trans,octa-cis-undecaprenyl diphospho-N-acetyl-alpha-D-muramoyl-L-alanyl-D-glutamyl-meso-2,6-diaminopimeloyl-D-alanyl-D-alanine + UDP-N-acetyl-alpha-D-glucosamine = di-trans,octa-cis-undecaprenyl diphospho-[N-acetyl-alpha-D-glucosaminyl-(1-&gt;4)]-N-acetyl-alpha-D-muramoyl-L-alanyl-D-glutamyl-meso-2,6-diaminopimeloyl-D-alanyl-D-alanine + UDP + H(+). It functions in the pathway cell wall biogenesis; peptidoglycan biosynthesis. Cell wall formation. Catalyzes the transfer of a GlcNAc subunit on undecaprenyl-pyrophosphoryl-MurNAc-pentapeptide (lipid intermediate I) to form undecaprenyl-pyrophosphoryl-MurNAc-(pentapeptide)GlcNAc (lipid intermediate II). The polypeptide is UDP-N-acetylglucosamine--N-acetylmuramyl-(pentapeptide) pyrophosphoryl-undecaprenol N-acetylglucosamine transferase (Burkholderia cenocepacia (strain HI2424)).